The chain runs to 227 residues: MVKSSLQRILNSHCFAREKEGDKRSATLHASRTMPLLSQHSRGGCSSESSRVALNCCSNLGPGPRWCSDVPHPPLKIPGGRGNSQRDHSLSASILYSDERLNVTEEPTSNDKTRVLSIQSTLTEAKQVTWRAVWSGGGLYIELPAGPLPEGSKDSFAALLEFAEEQLQADHVFICFPKNREDRAALLRTFSFLGFEIVRPGHPLVPKRPDACFMVYTLEREDPGEED.

Belongs to the ODC antizyme family. As to quaternary structure, interacts with ODC1 and thereby sterically blocks ODC homodimerization. Forms a ternary complex with PSMB4 and OAZ1 before PSMB4 is incorporated into the 20S proteasome. Interacts with AZIN2; this interaction disrupts the interaction between the antizyme and ODC1. Interacts with FAM171A1.

In terms of biological role, ornithine decarboxylase (ODC) antizyme protein that negatively regulates ODC activity and intracellular polyamine biosynthesis and uptake in response to increased intracellular polyamine levels. Binds to ODC monomers, inhibiting the assembly of the functional ODC homodimer, and targets the monomers for ubiquitin-independent proteolytic destruction by the 26S proteasome. Triggers ODC degradation by inducing the exposure of a cryptic proteasome-interacting surface of ODC. Stabilizes AZIN2 by interfering with its ubiquitination. Also inhibits cellular uptake of polyamines by inactivating the polyamine uptake transporter. SMAD1/OAZ1/PSMB4 complex mediates the degradation of the CREBBP/EP300 repressor SNIP1. Involved in the translocation of AZIN2 from ER-Golgi intermediate compartment (ERGIC) to the cytosol. The polypeptide is Ornithine decarboxylase antizyme 1 (Oaz1) (Mus musculus (Mouse)).